Here is a 517-residue protein sequence, read N- to C-terminus: C-22 sterol desaturase ERG5 (517 aa).

The chain crosses the membrane as a helical span at residues L21 to I41. C458 contributes to the heme binding site.

It belongs to the cytochrome P450 family. Heme serves as cofactor.

The protein localises to the endoplasmic reticulum membrane. The enzyme catalyses 5-dehydroepisterol + NADPH + O2 + H(+) = ergosta-5,7,22,24(28)-tetraen-3beta-ol + NADP(+) + 2 H2O. The protein operates within steroid metabolism; ergosterol biosynthesis; ergosterol from zymosterol: step 4/5. Its function is as follows. C-22 sterol desaturase; part of the third module of ergosterol biosynthesis pathway that includes the late steps of the pathway. ERG5 converts 5-dehydroepisterol into ergosta-5,7,22,24(28)-tetraen-3beta-ol by forming the C-22(23) double bond in the sterol side chain. The third module or late pathway involves the ergosterol synthesis itself through consecutive reactions that mainly occur in the endoplasmic reticulum (ER) membrane. Firstly, the squalene synthase ERG9 catalyzes the condensation of 2 farnesyl pyrophosphate moieties to form squalene, which is the precursor of all steroids. Squalene synthase is crucial for balancing the incorporation of farnesyl diphosphate (FPP) into sterol and nonsterol isoprene synthesis. Secondly, the squalene epoxidase ERG1 catalyzes the stereospecific oxidation of squalene to (S)-2,3-epoxysqualene, which is considered to be a rate-limiting enzyme in steroid biosynthesis. Then, the lanosterol synthase ERG7 catalyzes the cyclization of (S)-2,3 oxidosqualene to lanosterol, a reaction that forms the sterol core. In the next steps, lanosterol is transformed to zymosterol through a complex process involving various demethylation, reduction and desaturation reactions. The lanosterol 14-alpha-demethylase ERG11 (also known as CYP51) catalyzes C14-demethylation of lanosterol to produce 4,4'-dimethyl cholesta-8,14,24-triene-3-beta-ol, which is critical for ergosterol biosynthesis. The C-14 reductase ERG24 reduces the C14=C15 double bond of 4,4-dimethyl-cholesta-8,14,24-trienol to produce 4,4-dimethyl-cholesta-8,24-dienol. 4,4-dimethyl-cholesta-8,24-dienol is substrate of the C-4 demethylation complex ERG25-ERG26-ERG27 in which ERG25 catalyzes the three-step monooxygenation required for the demethylation of 4,4-dimethyl and 4alpha-methylsterols, ERG26 catalyzes the oxidative decarboxylation that results in a reduction of the 3-beta-hydroxy group at the C-3 carbon to an oxo group, and ERG27 is responsible for the reduction of the keto group on the C-3. ERG28 has a role as a scaffold to help anchor ERG25, ERG26 and ERG27 to the endoplasmic reticulum and ERG29 regulates the activity of the iron-containing C4-methylsterol oxidase ERG25. Then, the sterol 24-C-methyltransferase ERG6 catalyzes the methyl transfer from S-adenosyl-methionine to the C-24 of zymosterol to form fecosterol. The C-8 sterol isomerase ERG2 catalyzes the reaction which results in unsaturation at C-7 in the B ring of sterols and thus converts fecosterol to episterol. The sterol-C5-desaturase ERG3 then catalyzes the introduction of a C-5 double bond in the B ring to produce 5-dehydroepisterol. The C-22 sterol desaturase ERG5 further converts 5-dehydroepisterol into ergosta-5,7,22,24(28)-tetraen-3beta-ol by forming the C-22(23) double bond in the sterol side chain. Finally, ergosta-5,7,22,24(28)-tetraen-3beta-ol is substrate of the C-24(28) sterol reductase ERG4 to produce ergosterol. In Candida albicans (strain SC5314 / ATCC MYA-2876) (Yeast), this protein is C-22 sterol desaturase ERG5.